Reading from the N-terminus, the 78-residue chain is Protein FAM240B (78 aa).

It belongs to the FAM240 family.

The sequence is that of Protein FAM240B from Homo sapiens (Human).